A 478-amino-acid polypeptide reads, in one-letter code: BTB/POZ domain-containing protein 17 (478 aa).

The first 28 residues, Met1–Ala28, serve as a signal peptide directing secretion. Residues Asn61, Asn100, Asn195, and Asn307 are each glycosylated (N-linked (GlcNAc...) asparagine). The BTB domain occupies Ser63–Leu132. The BACK domain occupies Ala169–Gln269.

The protein resides in the secreted. This Mus musculus (Mouse) protein is BTB/POZ domain-containing protein 17 (Btbd17).